The chain runs to 90 residues: WAP four-disulfide core domain protein 12 (90 aa).

Residues Met1–Gly23 form the signal peptide. A WAP domain is found at Gly27 to Val74. Cystine bridges form between Cys34-Cys62, Cys41-Cys66, Cys49-Cys61, and Cys55-Cys70.

The protein resides in the secreted. Antibacterial protein. Putative acid-stable proteinase inhibitor. The polypeptide is WAP four-disulfide core domain protein 12 (WFDC12) (Gorilla gorilla gorilla (Western lowland gorilla)).